Consider the following 423-residue polypeptide: Histidine--tRNA ligase (423 aa).

Belongs to the class-II aminoacyl-tRNA synthetase family. Homodimer.

The protein resides in the cytoplasm. It carries out the reaction tRNA(His) + L-histidine + ATP = L-histidyl-tRNA(His) + AMP + diphosphate + H(+). This is Histidine--tRNA ligase from Laribacter hongkongensis (strain HLHK9).